The sequence spans 311 residues: Malate dehydrogenase (311 aa).

Residues 7–13 and aspartate 34 contribute to the NAD(+) site; that span reads GAAGGIG. Substrate-binding residues include arginine 81 and arginine 87. Residues asparagine 94 and 117–119 contribute to the NAD(+) site; that span reads ITN. Residues asparagine 119 and arginine 153 each contribute to the substrate site. Catalysis depends on histidine 177, which acts as the Proton acceptor. Methionine 227 contributes to the NAD(+) binding site.

The protein belongs to the LDH/MDH superfamily. MDH type 1 family. In terms of assembly, homodimer.

The catalysed reaction is (S)-malate + NAD(+) = oxaloacetate + NADH + H(+). Functionally, catalyzes the reversible oxidation of malate to oxaloacetate. The sequence is that of Malate dehydrogenase from Aliivibrio fischeri (strain ATCC 700601 / ES114) (Vibrio fischeri).